We begin with the raw amino-acid sequence, 1123 residues long: Ubiquitin carboxyl-terminal hydrolase 36 (1123 aa).

Composition is skewed to basic and acidic residues over residues 1-19 and 69-90; these read MPIVDKLKEALKPGRKDSA and GASRHKSGDDPPARRQGSEHTY. Disordered regions lie at residues 1-22 and 67-95; these read MPIVDKLKEALKPGRKDSADDG and TEGASRHKSGDDPPARRQGSEHTYESCGD. A USP domain is found at 122-423; that stretch reads AGLHNLGNTC…QAYVLFYLRI (302 aa). The active-site Nucleophile is Cys-131. Residue His-382 is the Proton acceptor of the active site. A phosphoserine mark is found at Ser-429 and Ser-464. Residues 430-577 are disordered; it reads PEGLISRTGS…RQGSWDSRDV (148 aa). The span at 491 to 503 shows a compositional bias: polar residues; sequence RNGSTLGLKSQNG. Residues 510–519 show a composition bias toward low complexity; it reads PSGSPSPKLS. Phosphoserine is present on Ser-546. The span at 557-571 shows a compositional bias: low complexity; sequence SNSNSSRSGSQRQGS. Residue Ser-582 is modified to Phosphoserine. Residues 589–999 form a disordered region; that stretch reads ATANGHGLKG…ESSSCAPSAN (411 aa). Residues 597–609 show a composition bias toward basic and acidic residues; that stretch reads KGNDESAGLDRRG. A compositionally biased stretch (low complexity) spans 610-623; it reads SSSSSPEHSASSDS. Residues 640-654 show a composition bias toward polar residues; the sequence is SQETNCSTAGHSKTP. Phosphoserine is present on Ser-667. Residues 669 to 681 are compositionally biased toward polar residues; the sequence is VLSNTTTEPASTM. Residue Ser-682 is modified to Phosphoserine. Residues 687–697 show a composition bias toward low complexity; that stretch reads KKLALSAKKAS. Residues Ser-713 and Ser-742 each carry the phosphoserine modification. The span at 773–785 shows a compositional bias: polar residues; the sequence is EPRSCSSISTALP. Residues 841-850 show a composition bias toward basic residues; that stretch reads HGKRKRKKKK. Residues 891–902 are compositionally biased toward polar residues; it reads GTQPQVNGQQVG. Ser-952 carries the post-translational modification Phosphoserine. The segment covering 963 to 975 has biased composition (basic and acidic residues); the sequence is QETQRAVEEDGHL.

It belongs to the peptidase C19 family. As to quaternary structure, interacts with isoform 3 of FBXW7; the interaction inhibits MYC degradation induced by SCF(FBW7) complex. Interacts with NTRK1; USP36 does not deubiquitinate NTRK1. Interacts with NEDD4L (via domains WW1, 3 and 4); the interaction inhibits ubiquitination of, at least, NTRK1, KCNQ2 and KCNQ3 by NEDD4L. Interacts (via C-terminus) with EXOSC10 (via C-terminus); the interaction is facilitated by the association with RNA and promotes sumoylation of EXOSC10. In terms of processing, polyubiquitinated by NEDD4L, no effect on USP36 protein levels. Both proteins interact with and regulate each other's ubiquitination levels. As to expression, broadly expressed.

The protein localises to the nucleus. It is found in the nucleolus. It localises to the cytoplasm. The enzyme catalyses Thiol-dependent hydrolysis of ester, thioester, amide, peptide and isopeptide bonds formed by the C-terminal Gly of ubiquitin (a 76-residue protein attached to proteins as an intracellular targeting signal).. In terms of biological role, deubiquitinase essential for the regulation of nucleolar structure and function. Required for cell and organism viability. Plays an important role in ribosomal RNA processing and protein synthesis, which is mediated, at least in part, through deubiquitination of DHX33, NPM1 and FBL, regulating their protein stability. Functions as a transcriptional repressor by deubiquiting histone H2B at the promoters of genes critical for cellular differentiation, such as CDKN1A, thereby preventing histone H3 'Lys-4' trimethylation (H3K4). Specifically deubiquitinates MYC in the nucleolus, leading to prevent MYC degradation by the proteasome: acts by specifically interacting with isoform 3 of FBXW7 (FBW7gamma) in the nucleolus and counteracting ubiquitination of MYC by the SCF(FBW7) complex. In contrast, it does not interact with isoform 1 of FBXW7 (FBW7alpha) in the nucleoplasm. Interacts to and regulates the actions of E3 ubiquitin-protein ligase NEDD4L over substrates such as NTRK1, KCNQ2 and KCNQ3, affecting their expression an functions. Deubiquitinates SOD2, regulates SOD2 protein stability. Deubiquitinase activity is required to control selective autophagy activation by ubiquitinated proteins. Promotes CEP63 stabilization through 'Lys-48'-linked deubiquitination leading to increased stability. Acts as a SUMO ligase to promote EXOSC10 sumoylation critical for the nucleolar RNA exosome function in rRNA processing. Binds to pre-rRNAs. This is Ubiquitin carboxyl-terminal hydrolase 36 from Homo sapiens (Human).